Here is a 507-residue protein sequence, read N- to C-terminus: ATP synthase subunit alpha, chloroplastic (507 aa).

170-177 (GDRQTGKT) contacts ATP. At threonine 257 the chain carries Phosphothreonine.

It belongs to the ATPase alpha/beta chains family. F-type ATPases have 2 components, CF(1) - the catalytic core - and CF(0) - the membrane proton channel. CF(1) has five subunits: alpha(3), beta(3), gamma(1), delta(1), epsilon(1). CF(0) has four main subunits: a, b, b' and c.

It is found in the plastid. It localises to the chloroplast thylakoid membrane. The catalysed reaction is ATP + H2O + 4 H(+)(in) = ADP + phosphate + 5 H(+)(out). Produces ATP from ADP in the presence of a proton gradient across the membrane. The alpha chain is a regulatory subunit. The polypeptide is ATP synthase subunit alpha, chloroplastic (Lobularia maritima (Sweet alyssum)).